The chain runs to 185 residues: NAD(P)H-dependent FMN reductase PA1204 (185 aa).

Residues 13–20 (SLRSGSYN) and 81–83 (YNY) each bind FMN. 115 to 122 (SAGRFGTA) lines the NAD(+) pocket.

The protein belongs to the SsuE family. In terms of assembly, homodimer. It depends on FMN as a cofactor.

Functionally, has NAD(P)H-dependent FMN reductase activity. In Pseudomonas aeruginosa (strain ATCC 15692 / DSM 22644 / CIP 104116 / JCM 14847 / LMG 12228 / 1C / PRS 101 / PAO1), this protein is NAD(P)H-dependent FMN reductase PA1204.